The sequence spans 566 residues: Glutamate--tRNA ligase (566 aa).

Residues 104-114 (PNPDGPLHLGN) carry the 'HIGH' region motif.

The protein belongs to the class-I aminoacyl-tRNA synthetase family. Glutamate--tRNA ligase type 2 subfamily.

The protein localises to the cytoplasm. It carries out the reaction tRNA(Glu) + L-glutamate + ATP = L-glutamyl-tRNA(Glu) + AMP + diphosphate. Functionally, catalyzes the attachment of glutamate to tRNA(Glu) in a two-step reaction: glutamate is first activated by ATP to form Glu-AMP and then transferred to the acceptor end of tRNA(Glu). The protein is Glutamate--tRNA ligase of Metallosphaera sedula (strain ATCC 51363 / DSM 5348 / JCM 9185 / NBRC 15509 / TH2).